We begin with the raw amino-acid sequence, 57 residues long: Delta-elapitoxin-Cb1a (57 aa).

Cystine bridges form between cysteine 3–cysteine 22, cysteine 15–cysteine 36, cysteine 40–cysteine 49, and cysteine 50–cysteine 55.

The protein belongs to the three-finger toxin family. Short-chain subfamily. Expressed by the venom gland.

Its subcellular location is the secreted. In terms of biological role, this toxin shifts the voltage-dependence of Nav1.4/SCN4A activation to more hyperpolarised potentials, inhibits inactivation, and produces large ramp currents, consistent with its profound effects on contractile force in an isolated skeletal muscle preparation. This toxin produces large muscle contractions and fasciculations in the indirectly stimulated chick biventer cervicis nerve-muscle assay, which are significantly inhibited by the addition of the sodium channel antagonist tetrodotoxin. This chain is Delta-elapitoxin-Cb1a, found in Calliophis bivirgatus (Blue Malaysian coral snake).